Here is a 121-residue protein sequence, read N- to C-terminus: UPF0102 protein Xfasm12_1748 (121 aa).

Belongs to the UPF0102 family.

In Xylella fastidiosa (strain M12), this protein is UPF0102 protein Xfasm12_1748.